Consider the following 231-residue polypeptide: 2-amino-5-formylamino-6-ribosylaminopyrimidin-4(3H)-one 5'-monophosphate deformylase (231 aa).

Fe cation contacts are provided by glutamate 29, histidine 31, aspartate 40, and histidine 110.

The protein belongs to the creatininase superfamily. FAPy deformylase family. As to quaternary structure, homodimer. Requires Fe(2+) as cofactor. It depends on Zn(2+) as a cofactor.

It catalyses the reaction 2-amino-5-formylamino-6-(5-phospho-D-ribosylamino)pyrimidin-4(3H)-one + H2O = 2,5-diamino-6-(1-D-ribosylamino)pyrimidin-4(3H)-one 5'-phosphate + formate + H(+). It functions in the pathway cofactor biosynthesis; coenzyme F420 biosynthesis. It participates in cofactor biosynthesis; riboflavin biosynthesis. In terms of biological role, catalyzes the hydrolysis of the formamide of 2-amino-5-formylamino-6-ribosylamino-4(3H)-pyrimidinone 5'-monophosphate (FAPy) to form 2,5-diamino-6-ribosylamino-4(3H)-pyrimidinone 5'-phosphate (APy). In Methanothermobacter marburgensis (strain ATCC BAA-927 / DSM 2133 / JCM 14651 / NBRC 100331 / OCM 82 / Marburg) (Methanobacterium thermoautotrophicum), this protein is 2-amino-5-formylamino-6-ribosylaminopyrimidin-4(3H)-one 5'-monophosphate deformylase.